Consider the following 471-residue polypeptide: Plasmepsin VII (471 aa).

An N-terminal signal peptide occupies residues 1-24 (MKSVYHHFAIIFFLKLFLCNCILS). The Peptidase A1 domain maps to 96–438 (YYGKIAIGEN…DKDNLQIGFV (343 aa)). Active-site residues include D115 and D325.

It belongs to the peptidase A1 family.

The protein resides in the cytoplasm. The sequence is that of Plasmepsin VII from Plasmodium berghei (strain Anka).